A 299-amino-acid chain; its full sequence is Large ribosomal subunit protein uL18 (299 aa).

It belongs to the universal ribosomal protein uL18 family. As to quaternary structure, component of the large ribosomal subunit (LSU). Interacts with Fmr1 to form the RNA-induced silencing complex (RISC), a ribonucleoprotein (RNP) complex involved in translation regulation, other components of the complex are Rm62, RpL11, AGO2 and Dcr-1.

The protein localises to the cytoplasm. Its subcellular location is the nucleus. Functionally, component of the ribosome, a large ribonucleoprotein complex responsible for the synthesis of proteins in the cell. The small ribosomal subunit (SSU) binds messenger RNAs (mRNAs) and translates the encoded message by selecting cognate aminoacyl-transfer RNA (tRNA) molecules. The large subunit (LSU) contains the ribosomal catalytic site termed the peptidyl transferase center (PTC), which catalyzes the formation of peptide bonds, thereby polymerizing the amino acids delivered by tRNAs into a polypeptide chain. The nascent polypeptides leave the ribosome through a tunnel in the LSU and interact with protein factors that function in enzymatic processing, targeting, and the membrane insertion of nascent chains at the exit of the ribosomal tunnel. This chain is Large ribosomal subunit protein uL18 (RpL5), found in Drosophila melanogaster (Fruit fly).